The following is a 158-amino-acid chain: Glycogen accumulation regulator GarA (158 aa).

T20 carries the phosphothreonine; by PknG modification. T21 is subject to Phosphothreonine; by PknB. In terms of domain architecture, FHA spans 76-125 (TSAGRHPDSDIFLDDVTVSRRHAEFRLEGGEFQVVDVGSLNGTYVNREPV).

In terms of assembly, monomer. Binds via its FHA domain to Kgd, Gdh, and the N-terminal region of PknG. In terms of processing, phosphorylated on Thr-21 by PknB. Phosphorylated on Thr-20 by PknG. Phosphorylation at either Thr-20 or Thr-21 prevents binding to target enzymes.

Its function is as follows. Involved in regulation of glutamate metabolism. Acts as a phosphorylation-dependent molecular switch that modulates the activities of Kgd and Gdh. In Mycolicibacterium smegmatis (strain ATCC 700084 / mc(2)155) (Mycobacterium smegmatis), this protein is Glycogen accumulation regulator GarA (garA).